The sequence spans 182 residues: UPF0397 protein BCG9842_B2659 (182 aa).

Helical transmembrane passes span 9 to 29, 40 to 60, 71 to 91, 114 to 134, and 142 to 162; these read VVAI…GFSI, AILT…IGLI, WGIW…MGLI, ITGL…DIIV, and IVIQ…VLGL.

The protein belongs to the UPF0397 family.

It localises to the cell membrane. The sequence is that of UPF0397 protein BCG9842_B2659 from Bacillus cereus (strain G9842).